A 120-amino-acid polypeptide reads, in one-letter code: Large ribosomal subunit protein uL18 (120 aa).

It belongs to the universal ribosomal protein uL18 family. In terms of assembly, part of the 50S ribosomal subunit; part of the 5S rRNA/L5/L18/L25 subcomplex. Contacts the 5S and 23S rRNAs.

This is one of the proteins that bind and probably mediate the attachment of the 5S RNA into the large ribosomal subunit, where it forms part of the central protuberance. This Afipia carboxidovorans (strain ATCC 49405 / DSM 1227 / KCTC 32145 / OM5) (Oligotropha carboxidovorans) protein is Large ribosomal subunit protein uL18.